Here is a 525-residue protein sequence, read N- to C-terminus: GMP synthase [glutamine-hydrolyzing] (525 aa).

Positions 9–207 (RILILDFGSQ…VRDICQCEAL (199 aa)) constitute a Glutamine amidotransferase type-1 domain. C86 serves as the catalytic Nucleophile. Active-site residues include H181 and E183. One can recognise a GMPS ATP-PPase domain in the interval 208-400 (WTPAKIIDDA…LGLPYDMLYR (193 aa)). 235 to 241 (SGGVDSS) contacts ATP.

In terms of assembly, homodimer.

The enzyme catalyses XMP + L-glutamine + ATP + H2O = GMP + L-glutamate + AMP + diphosphate + 2 H(+). Its pathway is purine metabolism; GMP biosynthesis; GMP from XMP (L-Gln route): step 1/1. Its function is as follows. Catalyzes the synthesis of GMP from XMP. The protein is GMP synthase [glutamine-hydrolyzing] of Enterobacter sp. (strain 638).